The primary structure comprises 209 residues: Uracil phosphoribosyltransferase (209 aa).

5-phospho-alpha-D-ribose 1-diphosphate contacts are provided by residues R79, R104, and 131-139; that span reads DPMLATGAS. Uracil-binding positions include I194 and 199 to 201; that span reads GDA. D200 is a binding site for 5-phospho-alpha-D-ribose 1-diphosphate.

Belongs to the UPRTase family. It depends on Mg(2+) as a cofactor.

It catalyses the reaction UMP + diphosphate = 5-phospho-alpha-D-ribose 1-diphosphate + uracil. It participates in pyrimidine metabolism; UMP biosynthesis via salvage pathway; UMP from uracil: step 1/1. Allosterically activated by GTP. In terms of biological role, catalyzes the conversion of uracil and 5-phospho-alpha-D-ribose 1-diphosphate (PRPP) to UMP and diphosphate. In Staphylococcus carnosus (strain TM300), this protein is Uracil phosphoribosyltransferase.